Consider the following 199-residue polypeptide: dITP/XTP pyrophosphatase (199 aa).

7-12 (TTNLHK) lines the substrate pocket. E41 and D70 together coordinate Mg(2+). The Proton acceptor role is filled by D70. Residues S71, 154 to 157 (FGYD), K177, and 182 to 183 (HR) contribute to the substrate site.

It belongs to the HAM1 NTPase family. In terms of assembly, homodimer. Mg(2+) is required as a cofactor.

It catalyses the reaction XTP + H2O = XMP + diphosphate + H(+). The enzyme catalyses dITP + H2O = dIMP + diphosphate + H(+). The catalysed reaction is ITP + H2O = IMP + diphosphate + H(+). Functionally, pyrophosphatase that catalyzes the hydrolysis of nucleoside triphosphates to their monophosphate derivatives, with a high preference for the non-canonical purine nucleotides XTP (xanthosine triphosphate), dITP (deoxyinosine triphosphate) and ITP. Seems to function as a house-cleaning enzyme that removes non-canonical purine nucleotides from the nucleotide pool, thus preventing their incorporation into DNA/RNA and avoiding chromosomal lesions. This chain is dITP/XTP pyrophosphatase, found in Protochlamydia amoebophila (strain UWE25).